The primary structure comprises 187 residues: Pterin-4-alpha-carbinolamine dehydratase 2, mitochondrial (187 aa).

The N-terminal 33 residues, 1–33 (MSRLLLPKLFSISRTQVPAASLFNNLYRRHKRF), are a transit peptide targeting the mitochondrion.

It belongs to the pterin-4-alpha-carbinolamine dehydratase family.

It is found in the mitochondrion. It catalyses the reaction (4aS,6R)-4a-hydroxy-L-erythro-5,6,7,8-tetrahydrobiopterin = (6R)-L-erythro-6,7-dihydrobiopterin + H2O. Its function is as follows. Involved in tetrahydrobiopterin biosynthesis. Possesses pterin-4-alpha-carbinolamine dehydratase activity when expressed in a bacterial heterolgous system. This is Pterin-4-alpha-carbinolamine dehydratase 2, mitochondrial from Arabidopsis thaliana (Mouse-ear cress).